The chain runs to 325 residues: Germination protease (325 aa).

Positions 1-7 (MYNVRTD) are excised as a propeptide.

This sequence belongs to the peptidase A25 family. As to quaternary structure, homotetramer. Autoproteolytically processed. The inactive tetrameric zymogen termed p46 autoprocesses to a smaller form termed p41, which is active only during spore germination.

It catalyses the reaction Endopeptidase action with P4 Glu or Asp, P1 preferably Glu &gt; Asp, P1' hydrophobic and P2' Ala.. In terms of biological role, initiates the rapid degradation of small, acid-soluble proteins during spore germination. The protein is Germination protease of Clostridium perfringens (strain 13 / Type A).